Reading from the N-terminus, the 406-residue chain is DNA primase large subunit PriL (406 aa).

Residues cysteine 302, cysteine 375, cysteine 384, and cysteine 389 each contribute to the [4Fe-4S] cluster site.

Belongs to the eukaryotic-type primase large subunit family. As to quaternary structure, heterodimer of a small subunit (PriS) and a large subunit (PriL). [4Fe-4S] cluster is required as a cofactor.

In terms of biological role, regulatory subunit of DNA primase, an RNA polymerase that catalyzes the synthesis of short RNA molecules used as primers for DNA polymerase during DNA replication. Stabilizes and modulates the activity of the small subunit, increasing the rate of DNA synthesis, and conferring RNA synthesis capability. The DNA polymerase activity may enable DNA primase to also catalyze primer extension after primer synthesis. May also play a role in DNA repair. The polypeptide is DNA primase large subunit PriL (Methanopyrus kandleri (strain AV19 / DSM 6324 / JCM 9639 / NBRC 100938)).